The sequence spans 576 residues: Proline--tRNA ligase (576 aa).

It belongs to the class-II aminoacyl-tRNA synthetase family. ProS type 1 subfamily. Homodimer.

The protein localises to the cytoplasm. It carries out the reaction tRNA(Pro) + L-proline + ATP = L-prolyl-tRNA(Pro) + AMP + diphosphate. Its function is as follows. Catalyzes the attachment of proline to tRNA(Pro) in a two-step reaction: proline is first activated by ATP to form Pro-AMP and then transferred to the acceptor end of tRNA(Pro). As ProRS can inadvertently accommodate and process non-cognate amino acids such as alanine and cysteine, to avoid such errors it has two additional distinct editing activities against alanine. One activity is designated as 'pretransfer' editing and involves the tRNA(Pro)-independent hydrolysis of activated Ala-AMP. The other activity is designated 'posttransfer' editing and involves deacylation of mischarged Ala-tRNA(Pro). The misacylated Cys-tRNA(Pro) is not edited by ProRS. This is Proline--tRNA ligase from Bordetella pertussis (strain Tohama I / ATCC BAA-589 / NCTC 13251).